A 194-amino-acid polypeptide reads, in one-letter code: Mitochondrial inner membrane protease ATP23 (194 aa).

The tract at residues M1–G20 is disordered. H96 is a binding site for Zn(2+). The active site involves E97. H100 provides a ligand contact to Zn(2+).

Belongs to the peptidase M76 family.

It localises to the mitochondrion inner membrane. Functionally, has a dual role in the assembly of mitochondrial ATPase. Acts as a protease that removes the N-terminal 10 residues of mitochondrial ATPase CF(0) subunit 6 (ATP6) at the intermembrane space side. Also involved in the correct assembly of the membrane-embedded ATPase CF(0) particle, probably mediating association of ATP6 with the subunit 9 ring. This Arabidopsis thaliana (Mouse-ear cress) protein is Mitochondrial inner membrane protease ATP23.